Here is a 79-residue protein sequence, read N- to C-terminus: CDC42 small effector protein 1 (79 aa).

S-palmitoyl cysteine attachment occurs at residues cysteine 10 and cysteine 11. The CRIB domain maps to 30-43 (IGEPMNFVHLTHIG). Positions 48–79 (GAGDGLAMTGAVQEQMRSKGNRDRPWSNSRGL) are disordered. Over residues 63–72 (MRSKGNRDRP) the composition is skewed to basic and acidic residues.

This sequence belongs to the CDC42SE/SPEC family. In terms of assembly, interacts with CDC42 (in GTP-bound form). Interacts weakly with RAC1 and not at all with RHOA.

The protein localises to the cytoplasm. The protein resides in the cytoskeleton. It localises to the cell membrane. In terms of biological role, probably involved in the organization of the actin cytoskeleton by acting downstream of CDC42, inducing actin filament assembly. Alters CDC42-induced cell shape changes. In activated T-cells, may play a role in CDC42-mediated F-actin accumulation at the immunological synapse. May play a role in early contractile events in phagocytosis in macrophages. The chain is CDC42 small effector protein 1 (CDC42SE1) from Bos taurus (Bovine).